We begin with the raw amino-acid sequence, 102 residues long: Small ribosomal subunit protein uS10 (102 aa).

This sequence belongs to the universal ribosomal protein uS10 family. Part of the 30S ribosomal subunit.

Functionally, involved in the binding of tRNA to the ribosomes. The protein is Small ribosomal subunit protein uS10 of Salinispora tropica (strain ATCC BAA-916 / DSM 44818 / JCM 13857 / NBRC 105044 / CNB-440).